The following is a 475-amino-acid chain: Cobyric acid synthase (475 aa).

Positions 244 to 431 (KLNVVVPVLT…LHGFFDEADV (188 aa)) constitute a GATase cobBQ-type domain. The Nucleophile role is filled by C325. Residue H423 is part of the active site.

The protein belongs to the CobB/CobQ family. CobQ subfamily.

It functions in the pathway cofactor biosynthesis; adenosylcobalamin biosynthesis. Functionally, catalyzes amidations at positions B, D, E, and G on adenosylcobyrinic A,C-diamide. NH(2) groups are provided by glutamine, and one molecule of ATP is hydrogenolyzed for each amidation. This chain is Cobyric acid synthase, found in Vibrio campbellii (strain ATCC BAA-1116).